A 195-amino-acid polypeptide reads, in one-letter code: Probable GTP-binding protein EngB (195 aa).

The region spanning 22–194 (LKGEVAFVGR…LDLISTLLKE (173 aa)) is the EngB-type G domain. Residues 30-37 (GRSNVGKS), 56-60 (GKTRS), 74-77 (DLPG), 141-144 (TKMD), and 173-175 (TSS) each bind GTP. Mg(2+) contacts are provided by Ser37 and Thr58.

It belongs to the TRAFAC class TrmE-Era-EngA-EngB-Septin-like GTPase superfamily. EngB GTPase family. The cofactor is Mg(2+).

Necessary for normal cell division and for the maintenance of normal septation. The chain is Probable GTP-binding protein EngB from Thermotoga petrophila (strain ATCC BAA-488 / DSM 13995 / JCM 10881 / RKU-1).